The chain runs to 123 residues: UPF0102 protein PSPPH_4120 (123 aa).

The protein belongs to the UPF0102 family.

This chain is UPF0102 protein PSPPH_4120, found in Pseudomonas savastanoi pv. phaseolicola (strain 1448A / Race 6) (Pseudomonas syringae pv. phaseolicola (strain 1448A / Race 6)).